A 415-amino-acid polypeptide reads, in one-letter code: Histidine--tRNA ligase (415 aa).

This sequence belongs to the class-II aminoacyl-tRNA synthetase family. In terms of assembly, homodimer.

The protein localises to the cytoplasm. The enzyme catalyses tRNA(His) + L-histidine + ATP = L-histidyl-tRNA(His) + AMP + diphosphate + H(+). In Clostridium botulinum (strain 657 / Type Ba4), this protein is Histidine--tRNA ligase.